Reading from the N-terminus, the 185-residue chain is Threonylcarbamoyl-AMP synthase (185 aa).

One can recognise a YrdC-like domain in the interval 4–185; it reads SFRAQCAARV…LVTGQVIRPA (182 aa).

It belongs to the SUA5 family. TsaC subfamily.

Its subcellular location is the cytoplasm. It carries out the reaction L-threonine + hydrogencarbonate + ATP = L-threonylcarbamoyladenylate + diphosphate + H2O. In terms of biological role, required for the formation of a threonylcarbamoyl group on adenosine at position 37 (t(6)A37) in tRNAs that read codons beginning with adenine. Catalyzes the conversion of L-threonine, HCO(3)(-)/CO(2) and ATP to give threonylcarbamoyl-AMP (TC-AMP) as the acyladenylate intermediate, with the release of diphosphate. This Pseudomonas aeruginosa (strain UCBPP-PA14) protein is Threonylcarbamoyl-AMP synthase.